We begin with the raw amino-acid sequence, 458 residues long: Retinoic acid receptor alpha (458 aa).

Residues methionine 1–proline 86 are modulating. A compositionally biased stretch (polar residues) spans threonine 54–glutamate 68. The disordered stretch occupies residues threonine 54–serine 76. NR C4-type zinc fingers lie at residues cysteine 87–cysteine 107 and cysteine 123–cysteine 147. Residues cysteine 87 to methionine 152 constitute a DNA-binding region (nuclear receptor). Positions serine 153–proline 182 are hinge. Residues glutamate 183 to serine 417 enclose the NR LBD domain. The 9aaTAD motif lies at proline 408 to asparagine 416. The interval serine 417–proline 458 is disordered. A compositionally biased stretch (low complexity) spans cysteine 440–proline 458.

It belongs to the nuclear hormone receptor family. NR1 subfamily. As to quaternary structure, heterodimer; with an rxr molecule. Binds DNA preferentially as a rar/rxr heterodimer. As to expression, expressed in forelimb, in the distal forelimb blastema, kidney, liver and hindlimb blastemal mesenchymal cells.

The protein localises to the nucleus. Its function is as follows. Receptor for retinoic acid. Retinoic acid receptors bind as heterodimers to their target response elements in response to their ligands, all-trans or 9-cis retinoic acid, and regulate gene expression in various biological processes. The rar/rxr heterodimers bind to the retinoic acid response elements (RARE) composed of tandem 5'-AGGTCA-3' sites known as DR1-DR5. Retinoic acid signaling appears to be involved in specifying proximal-distal axis in limb regeneration. The polypeptide is Retinoic acid receptor alpha (RARA) (Notophthalmus viridescens (Eastern newt)).